A 419-amino-acid chain; its full sequence is Zinc metalloproteinase-disintegrin-like atrolysin-A (419 aa).

In terms of domain architecture, Peptidase M12B spans 6–202; it reads RYVELVIVAD…YNPQCILNEP (197 aa). Glutamate 9 provides a ligand contact to Ca(2+). Asparagine 72 is a glycosylation site (N-linked (GlcNAc...) asparagine). Residue aspartate 93 coordinates Ca(2+). 3 disulfide bridges follow: cysteine 117–cysteine 197, cysteine 157–cysteine 181, and cysteine 159–cysteine 164. A Zn(2+)-binding site is contributed by histidine 142. Glutamate 143 is a catalytic residue. 2 residues coordinate Zn(2+): histidine 146 and histidine 152. Ca(2+) contacts are provided by cysteine 197, asparagine 200, valine 212, asparagine 215, leucine 217, glutamate 219, glutamate 222, and aspartate 225. In terms of domain architecture, Disintegrin spans 210–296; it reads PPVCGNELLE…DCPTDDFHRN (87 aa). 14 cysteine pairs are disulfide-bonded: cysteine 213–cysteine 242, cysteine 224–cysteine 237, cysteine 226–cysteine 232, cysteine 236–cysteine 259, cysteine 250–cysteine 256, cysteine 255–cysteine 281, cysteine 268–cysteine 288, cysteine 275–cysteine 307, cysteine 300–cysteine 312, cysteine 319–cysteine 369, cysteine 334–cysteine 376, cysteine 347–cysteine 357, cysteine 364–cysteine 398, and cysteine 392–cysteine 403. The D/ECD-tripeptide signature appears at 274–276; sequence ECD. N-linked (GlcNAc...) asparagine glycosylation is found at asparagine 326, asparagine 338, and asparagine 342.

This sequence belongs to the venom metalloproteinase (M12B) family. P-III subfamily. P-IIIa sub-subfamily. As to quaternary structure, monomer. Zn(2+) serves as cofactor. In terms of tissue distribution, expressed by the venom gland.

It is found in the secreted. The enzyme catalyses Cleavage of 3-Asn-|-Gln-4, 5-His-|-Leu-6, 10-His-|-Leu-11, 14-Ala-|-Leu-15 and 16-Tyr-|-Leu-17 in insulin B chain. Removes C-terminal Leu from small peptides.. In terms of biological role, snake venom zinc metalloproteinase-disintegrin that causes hemorrhage by provoking the degradation of the sub-endothelial matrix proteins (fibronectin, laminin, type IV collagen, nidogen, and gelatins) and disturbances in platelet function. The recombinant cysteine-rich domain interacts with the alpha-2/beta-1 integrin (ITGA2/ITGB1) (collagen receptor), and inhibits the platelet aggregation induced by collagen. The chain is Zinc metalloproteinase-disintegrin-like atrolysin-A from Crotalus atrox (Western diamondback rattlesnake).